The chain runs to 97 residues: Na(+)/H(+) antiporter subunit F1 (97 aa).

Transmembrane regions (helical) follow at residues 3–23, 35–55, and 60–80; these read FKIFIITALIIVVLSMLAMLI, VVALDAIGLQLMAVIALFSIL, and YMLVVILMVGILAFLGTAVFS.

This sequence belongs to the CPA3 antiporters (TC 2.A.63) subunit F family. May form a heterooligomeric complex that consists of seven subunits: mnhA1, mnhB1, mnhC1, mnhD1, mnhE1, mnhF1 and mnhG1.

The protein resides in the cell membrane. In terms of biological role, mnh complex is a Na(+)/H(+) antiporter involved in Na(+) excretion. The chain is Na(+)/H(+) antiporter subunit F1 (mnhF1) from Staphylococcus epidermidis (strain ATCC 35984 / DSM 28319 / BCRC 17069 / CCUG 31568 / BM 3577 / RP62A).